The following is a 1584-amino-acid chain: Pentafunctional AROM polypeptide (1584 aa).

A 3-dehydroquinate synthase region spans residues 1 to 384; the sequence is MSQDTDVVSV…YEKHATVVSD (384 aa). NAD(+) is bound by residues 46-48, 83-86, 114-116, and Asp119; these read DTN, ETSK, and GGV. 7-phospho-2-dehydro-3-deoxy-D-arabino-heptonate is bound at residue Arg130. NAD(+) is bound at residue 139-140; sequence TT. Residues Asp146 and Lys152 each contribute to the 7-phospho-2-dehydro-3-deoxy-D-arabino-heptonate site. Residue Lys161 participates in NAD(+) binding. Residue Asn162 coordinates 7-phospho-2-dehydro-3-deoxy-D-arabino-heptonate. NAD(+) contacts are provided by residues 179 to 182 and Asn190; that span reads FLET. Glu194 contacts Zn(2+). Residues 194 to 197 and Lys250 contribute to the 7-phospho-2-dehydro-3-deoxy-D-arabino-heptonate site; that span reads EVIK. The Proton acceptor; for 3-dehydroquinate synthase activity role is filled by Glu260. 7-phospho-2-dehydro-3-deoxy-D-arabino-heptonate-binding positions include 264-268 and His271; that span reads RNLLN. Zn(2+) is bound at residue His271. The active-site Proton acceptor; for 3-dehydroquinate synthase activity is the His275. 2 residues coordinate 7-phospho-2-dehydro-3-deoxy-D-arabino-heptonate: His287 and Lys356. His287 contacts Zn(2+). Residues 397-843 are EPSP synthase; the sequence is VSPFDNSVSD…WDVLRNSFKI (447 aa). The active-site For EPSP synthase activity is the Cys825. The segment at 863–1058 is shikimate kinase; it reads RASVILIGMR…IQKPHSFFLS (196 aa). 870-877 lines the ATP pocket; sequence GMRGAGKT. The segment at 1059-1280 is 3-dehydroquinase; it reads LTFPNINDAI…AAPGQLSVRQ (222 aa). Residue His1182 is the Proton acceptor; for 3-dehydroquinate dehydratase activity of the active site. Lys1211 (schiff-base intermediate with substrate; for 3-dehydroquinate dehydratase activity) is an active-site residue. The shikimate dehydrogenase stretch occupies residues 1293–1584; it reads PKKFYLFGTP…YMVLCAKEHN (292 aa).

This sequence in the N-terminal section; belongs to the sugar phosphate cyclases superfamily. Dehydroquinate synthase family. The protein in the 2nd section; belongs to the EPSP synthase family. In the 3rd section; belongs to the shikimate kinase family. It in the 4th section; belongs to the type-I 3-dehydroquinase family. This sequence in the C-terminal section; belongs to the shikimate dehydrogenase family. As to quaternary structure, homodimer. Zn(2+) serves as cofactor.

The protein resides in the cytoplasm. The enzyme catalyses 7-phospho-2-dehydro-3-deoxy-D-arabino-heptonate = 3-dehydroquinate + phosphate. It carries out the reaction 3-dehydroquinate = 3-dehydroshikimate + H2O. It catalyses the reaction shikimate + NADP(+) = 3-dehydroshikimate + NADPH + H(+). The catalysed reaction is shikimate + ATP = 3-phosphoshikimate + ADP + H(+). The enzyme catalyses 3-phosphoshikimate + phosphoenolpyruvate = 5-O-(1-carboxyvinyl)-3-phosphoshikimate + phosphate. Its pathway is metabolic intermediate biosynthesis; chorismate biosynthesis; chorismate from D-erythrose 4-phosphate and phosphoenolpyruvate: step 2/7. It participates in metabolic intermediate biosynthesis; chorismate biosynthesis; chorismate from D-erythrose 4-phosphate and phosphoenolpyruvate: step 3/7. The protein operates within metabolic intermediate biosynthesis; chorismate biosynthesis; chorismate from D-erythrose 4-phosphate and phosphoenolpyruvate: step 4/7. It functions in the pathway metabolic intermediate biosynthesis; chorismate biosynthesis; chorismate from D-erythrose 4-phosphate and phosphoenolpyruvate: step 5/7. Its pathway is metabolic intermediate biosynthesis; chorismate biosynthesis; chorismate from D-erythrose 4-phosphate and phosphoenolpyruvate: step 6/7. Its function is as follows. The AROM polypeptide catalyzes 5 consecutive enzymatic reactions in prechorismate polyaromatic amino acid biosynthesis. This is Pentafunctional AROM polypeptide from Schizosaccharomyces japonicus (strain yFS275 / FY16936) (Fission yeast).